The chain runs to 108 residues: Transcription factor AmrZ (108 aa).

Functions both as a transcriptional activator and a repressor of multiple genes encoding virulence factors as well as genes involved in environmental adaptation. Represses genes involved in iron homeostasis. Modulates intracellular levels of c-di-GMP which in turn regulates swimming motility and biofilm formation. This is Transcription factor AmrZ from Pseudomonas ogarae (strain DSM 112162 / CECT 30235 / F113).